Reading from the N-terminus, the 393-residue chain is NAD(P)H-quinone oxidoreductase subunit H, chloroplastic (393 aa).

Belongs to the complex I 49 kDa subunit family. In terms of assembly, NDH is composed of at least 16 different subunits, 5 of which are encoded in the nucleus.

The protein localises to the plastid. It localises to the chloroplast thylakoid membrane. It catalyses the reaction a plastoquinone + NADH + (n+1) H(+)(in) = a plastoquinol + NAD(+) + n H(+)(out). The enzyme catalyses a plastoquinone + NADPH + (n+1) H(+)(in) = a plastoquinol + NADP(+) + n H(+)(out). Its function is as follows. NDH shuttles electrons from NAD(P)H:plastoquinone, via FMN and iron-sulfur (Fe-S) centers, to quinones in the photosynthetic chain and possibly in a chloroplast respiratory chain. The immediate electron acceptor for the enzyme in this species is believed to be plastoquinone. Couples the redox reaction to proton translocation, and thus conserves the redox energy in a proton gradient. This chain is NAD(P)H-quinone oxidoreductase subunit H, chloroplastic, found in Spinacia oleracea (Spinach).